The following is a 424-amino-acid chain: Methylthioribose-1-phosphate isomerase (424 aa).

The Proton donor role is filled by Asp281.

It belongs to the eIF-2B alpha/beta/delta subunits family. MtnA subfamily.

Its subcellular location is the cytoplasm. The protein localises to the nucleus. The enzyme catalyses 5-(methylsulfanyl)-alpha-D-ribose 1-phosphate = 5-(methylsulfanyl)-D-ribulose 1-phosphate. Its pathway is amino-acid biosynthesis; L-methionine biosynthesis via salvage pathway; L-methionine from S-methyl-5-thio-alpha-D-ribose 1-phosphate: step 1/6. Functionally, catalyzes the interconversion of methylthioribose-1-phosphate (MTR-1-P) into methylthioribulose-1-phosphate (MTRu-1-P). The chain is Methylthioribose-1-phosphate isomerase from Candida dubliniensis (strain CD36 / ATCC MYA-646 / CBS 7987 / NCPF 3949 / NRRL Y-17841) (Yeast).